Consider the following 486-residue polypeptide: tRNA sulfurtransferase (486 aa).

Residues 61–165 (AILIDVLGRI…NDHMMLIKAR (105 aa)) form the THUMP domain. ATP is bound by residues 183-184 (LI), Lys265, Gly287, and Gln296. Residues Cys344 and Cys456 are joined by a disulfide bond. Residues 404 to 481 (LSANDVILDI…NGFANVRVFA (78 aa)) form the Rhodanese domain. The active-site Cysteine persulfide intermediate is the Cys456.

It belongs to the ThiI family.

It localises to the cytoplasm. It carries out the reaction [ThiI sulfur-carrier protein]-S-sulfanyl-L-cysteine + a uridine in tRNA + 2 reduced [2Fe-2S]-[ferredoxin] + ATP + H(+) = [ThiI sulfur-carrier protein]-L-cysteine + a 4-thiouridine in tRNA + 2 oxidized [2Fe-2S]-[ferredoxin] + AMP + diphosphate. It catalyses the reaction [ThiS sulfur-carrier protein]-C-terminal Gly-Gly-AMP + S-sulfanyl-L-cysteinyl-[cysteine desulfurase] + AH2 = [ThiS sulfur-carrier protein]-C-terminal-Gly-aminoethanethioate + L-cysteinyl-[cysteine desulfurase] + A + AMP + 2 H(+). Its pathway is cofactor biosynthesis; thiamine diphosphate biosynthesis. Its function is as follows. Catalyzes the ATP-dependent transfer of a sulfur to tRNA to produce 4-thiouridine in position 8 of tRNAs, which functions as a near-UV photosensor. Also catalyzes the transfer of sulfur to the sulfur carrier protein ThiS, forming ThiS-thiocarboxylate. This is a step in the synthesis of thiazole, in the thiamine biosynthesis pathway. The sulfur is donated as persulfide by IscS. The sequence is that of tRNA sulfurtransferase from Mannheimia succiniciproducens (strain KCTC 0769BP / MBEL55E).